The following is a 725-amino-acid chain: Threonine--tRNA ligase, cytoplasmic (725 aa).

A TGS domain is found at 80-142 (EPIQITLPDG…EGNAKLELLK (63 aa)).

Belongs to the class-II aminoacyl-tRNA synthetase family.

It is found in the cytoplasm. The enzyme catalyses tRNA(Thr) + L-threonine + ATP = L-threonyl-tRNA(Thr) + AMP + diphosphate + H(+). The protein is Threonine--tRNA ligase, cytoplasmic of Caenorhabditis elegans.